Consider the following 174-residue polypeptide: CASP-like protein 4D2 (174 aa).

Residues 1-14 lie on the Cytoplasmic side of the membrane; it reads MAPPPPSPPAVSLK. A helical membrane pass occupies residues 15 to 35; that stretch reads VLLLLLRVLTGVFLVIALIIL. The Extracellular portion of the chain corresponds to 36-60; that stretch reads STNSVTIVSQGSALKFHFKDVYAYR. A helical transmembrane segment spans residues 61–81; that stretch reads YMLSAAVIGLVYAVIQLFFTI. Topologically, residues 82–97 are cytoplasmic; that stretch reads SEFATGVKNPFNYQLD. Residues 98–118 traverse the membrane as a helical segment; that stretch reads FYGDKLISYLVATGSAAGFGV. The Extracellular portion of the chain corresponds to 119–150; it reads TKDLKDTFLALVALDSTDPVDKFFSKGYASAS. A helical transmembrane segment spans residues 151-171; the sequence is LLLFAFICLAVLSVFSSFAMA. Over 172–174 the chain is Cytoplasmic; it reads KRN.

This sequence belongs to the Casparian strip membrane proteins (CASP) family. As to quaternary structure, homodimer and heterodimers.

It localises to the cell membrane. This is CASP-like protein 4D2 from Arabidopsis thaliana (Mouse-ear cress).